A 662-amino-acid polypeptide reads, in one-letter code: Transketolase (662 aa).

Residue His28 participates in substrate binding. Residues His68 and 115–117 contribute to the thiamine diphosphate site; that span reads GPL. Asp156 contacts Mg(2+). Residues Gly157 and Asn186 each contribute to the thiamine diphosphate site. 2 residues coordinate Mg(2+): Asn186 and Ile188. Substrate-binding residues include His261, Arg356, and Ser383. His261 lines the thiamine diphosphate pocket. Glu410 functions as the Proton donor in the catalytic mechanism. Phe436 serves as a coordination point for thiamine diphosphate. Substrate contacts are provided by His460, Asp468, and Arg519.

It belongs to the transketolase family. In terms of assembly, homodimer. Requires Mg(2+) as cofactor. The cofactor is Ca(2+). It depends on Mn(2+) as a cofactor. Co(2+) serves as cofactor. Thiamine diphosphate is required as a cofactor.

It carries out the reaction D-sedoheptulose 7-phosphate + D-glyceraldehyde 3-phosphate = aldehydo-D-ribose 5-phosphate + D-xylulose 5-phosphate. It participates in carbohydrate biosynthesis; Calvin cycle. Its pathway is carbohydrate degradation; pentose phosphate pathway. Catalyzes the transfer of a two-carbon ketol group from a ketose donor to an aldose acceptor, via a covalent intermediate with the cofactor thiamine pyrophosphate. In Staphylococcus aureus (strain COL), this protein is Transketolase (tkt).